The sequence spans 433 residues: tRNA(Ile)-lysidine synthase (433 aa).

37–42 lines the ATP pocket; it reads SGGKDS.

This sequence belongs to the tRNA(Ile)-lysidine synthase family.

It localises to the cytoplasm. It carries out the reaction cytidine(34) in tRNA(Ile2) + L-lysine + ATP = lysidine(34) in tRNA(Ile2) + AMP + diphosphate + H(+). Its function is as follows. Ligates lysine onto the cytidine present at position 34 of the AUA codon-specific tRNA(Ile) that contains the anticodon CAU, in an ATP-dependent manner. Cytidine is converted to lysidine, thus changing the amino acid specificity of the tRNA from methionine to isoleucine. The chain is tRNA(Ile)-lysidine synthase from Leptospira interrogans serogroup Icterohaemorrhagiae serovar copenhageni (strain Fiocruz L1-130).